Reading from the N-terminus, the 299-residue chain is uncharacterized protein (299 aa).

The disordered stretch occupies residues 1-38; the sequence is MSLDSNSDTEFELVPKFQTQPTRGDAPKSPELEEVSTV.

Belongs to the calycin superfamily. Fatty-acid binding protein (FABP) family.

This is an uncharacterized protein from Caenorhabditis elegans.